The chain runs to 427 residues: MTLSKSKLLFERAKKVIPGGVNSPVRAFGAVGGYPPFIKKAKGARIYDADGNEYIDYVGSWGPMILGHSHPRVLEAVSKTMVDGLSFGAATELEVQMAELITELVPSVEMVRMVNSGTEAVMSAIRVARGYTKREKIIKFAGCYHGHADSMLVKVGSGAMTNGIPNSGGVTAGAAKDTLIARYNDIDSVKLLFEQNKGNIAAVIVEPVAANMGVVPPKDNFLEELRKLCDKEEALLIFDEVITGFRLAIGGAQQYFGVNADLVTYGKIIGGGMPVGAYGGRREIMECVAPVGDVYQAGTLSGNPIAMSAGIATLRELYENPGIFENINRLGQRLSEGLGKITKYTVKAVGSLVCVFMTEEEVNDYDSAVKSDTGLFGRYFNHLLNNGIYIAPSQFEAMFVSNAHTDKDIDETLEKVSLFFARKSPPA.

The residue at position 267 (K267) is an N6-(pyridoxal phosphate)lysine.

It belongs to the class-III pyridoxal-phosphate-dependent aminotransferase family. HemL subfamily. Homodimer. Pyridoxal 5'-phosphate serves as cofactor.

It localises to the cytoplasm. It carries out the reaction (S)-4-amino-5-oxopentanoate = 5-aminolevulinate. It functions in the pathway porphyrin-containing compound metabolism; protoporphyrin-IX biosynthesis; 5-aminolevulinate from L-glutamyl-tRNA(Glu): step 2/2. This is Glutamate-1-semialdehyde 2,1-aminomutase from Acetivibrio thermocellus (strain ATCC 27405 / DSM 1237 / JCM 9322 / NBRC 103400 / NCIMB 10682 / NRRL B-4536 / VPI 7372) (Clostridium thermocellum).